Here is a 1202-residue protein sequence, read N- to C-terminus: DNA-directed RNA polymerase subunit beta (1202 aa).

The span at 1151–1162 shows a compositional bias: acidic residues; that stretch reads LRDMDEEDDDVV. The tract at residues 1151–1202 is disordered; sequence LRDMDEEDDDVVNVDALSKYAEKQNEKTNASAEEAKAPSTESAPVETKNNQN. The segment covering 1189 to 1202 has biased composition (polar residues); it reads STESAPVETKNNQN.

The protein belongs to the RNA polymerase beta chain family. The RNAP catalytic core consists of 2 alpha, 1 beta, 1 beta' and 1 omega subunit. When a sigma factor is associated with the core the holoenzyme is formed, which can initiate transcription.

It catalyses the reaction RNA(n) + a ribonucleoside 5'-triphosphate = RNA(n+1) + diphosphate. DNA-dependent RNA polymerase catalyzes the transcription of DNA into RNA using the four ribonucleoside triphosphates as substrates. This Pediococcus pentosaceus (strain ATCC 25745 / CCUG 21536 / LMG 10740 / 183-1w) protein is DNA-directed RNA polymerase subunit beta.